The chain runs to 127 residues: MATASRKKKKVKVTPEGTVHIKASFNNVMVTITDTLGNTVSWSSAGKNGFKGSKKNTPYASQVTSEAAAKEAYDLGMRYVDVLIKGPGSGRDAAIRALQGVGLEVRSIRDITPLPHNGCRPPKRRRV.

The protein belongs to the universal ribosomal protein uS11 family. Part of the 30S ribosomal subunit. Interacts with proteins S7 and S18. Binds to IF-3.

In terms of biological role, located on the platform of the 30S subunit, it bridges several disparate RNA helices of the 16S rRNA. Forms part of the Shine-Dalgarno cleft in the 70S ribosome. This Chlorobaculum tepidum (strain ATCC 49652 / DSM 12025 / NBRC 103806 / TLS) (Chlorobium tepidum) protein is Small ribosomal subunit protein uS11.